We begin with the raw amino-acid sequence, 345 residues long: Dihydroorotase (345 aa).

H13 and H15 together coordinate Zn(2+). Residues 15–17 and N41 each bind substrate; that span reads HFR. Zn(2+) is bound by residues K98, H135, and H173. N6-carboxylysine is present on K98. Residue H135 coordinates substrate. L218 contributes to the substrate binding site. Position 246 (D246) interacts with Zn(2+). D246 is a catalytic residue. Positions 250 and 262 each coordinate substrate.

It belongs to the metallo-dependent hydrolases superfamily. DHOase family. Class II DHOase subfamily. In terms of assembly, homodimer. Requires Zn(2+) as cofactor.

The catalysed reaction is (S)-dihydroorotate + H2O = N-carbamoyl-L-aspartate + H(+). Its pathway is pyrimidine metabolism; UMP biosynthesis via de novo pathway; (S)-dihydroorotate from bicarbonate: step 3/3. Its function is as follows. Catalyzes the reversible cyclization of carbamoyl aspartate to dihydroorotate. In Shewanella frigidimarina (strain NCIMB 400), this protein is Dihydroorotase.